The following is a 786-amino-acid chain: Digalactosyldiacylglycerol synthase 1, chloroplastic (786 aa).

Residues 1-25 (MASQRQPPSSSNAFSFLSKGWREVR) constitute a chloroplast transit peptide.

This sequence belongs to the glycosyltransferase group 1 family. Glycosyltransferase 4 subfamily. As to expression, high expression in nodules infected cells, but low in nodule inner cortex and root central cylinder.

It localises to the plastid. It is found in the chloroplast outer membrane. The protein localises to the plastid outer membrane. It carries out the reaction a 1,2-diacyl-3-O-(beta-D-galactosyl)-sn-glycerol + UDP-alpha-D-galactose = a 1,2-diacyl-3-O-[alpha-D-galactosyl-(1-&gt;6)-beta-D-galactosyl]-sn-glycerol + UDP + H(+). Involved in the synthesis of diacylglycerol galactolipids that are specifically found in thylakoid and in nodule peribacteroid membranes. Specific for alpha-glycosidic linkages. The polypeptide is Digalactosyldiacylglycerol synthase 1, chloroplastic (Lotus japonicus (Lotus corniculatus var. japonicus)).